Consider the following 687-residue polypeptide: Hemin receptor (687 aa).

An N-terminal signal peptide occupies residues 1-28 (MPRSTSDRFRWSPLSLAIACTLSLAVQA). The TonB box signature appears at 44–51 (DTMVVTAT). In terms of domain architecture, TBDR plug spans 56–167 (SSFEAPMMVT…LGGVISYETV (112 aa)). The region spanning 178-687 (NSGYRVYSAA…NAKFFVSYQW (510 aa)) is the TBDR beta-barrel domain. A disordered region spans residues 319 to 338 (ARPQGTPEEGRKQTTKGGKL). Basic and acidic residues predominate over residues 326–338 (EEGRKQTTKGGKL). The TonB C-terminal box signature appears at 670–687 (QGVPQDGRNAKFFVSYQW).

Belongs to the TonB-dependent receptor family.

Its subcellular location is the cell outer membrane. This protein is involved in the initial step of iron uptake by binding hemin, an iron chelatin siderophore that allows the bacteria to extract iron from the environment. In Yersinia enterocolitica, this protein is Hemin receptor (hemR).